We begin with the raw amino-acid sequence, 1009 residues long: Regulator of telomere elongation helicase 1 homolog (1009 aa).

The Helicase ATP-binding domain maps to 7–322; that stretch reads AGIPVHFPFE…KEMLLELEKA (316 aa). 42–49 contacts ATP; the sequence is SPTGTGKT. Residues Cys146, Cys164, Cys173, and Cys209 each coordinate [4Fe-4S] cluster. A DEAH box motif is present at residues 252–255; sequence DEAH.

Belongs to the helicase family. RAD3/XPD subfamily.

It is found in the nucleus. It catalyses the reaction ATP + H2O = ADP + phosphate + H(+). Functionally, a probable ATP-dependent DNA helicase implicated in DNA repair and the maintenance of genomic stability. Acts as an anti-recombinase to counteract toxic recombination and limit crossover during meiosis. Regulates meiotic recombination and crossover homeostasis by physically dissociating strand invasion events and thereby promotes noncrossover repair by meiotic synthesis dependent strand annealing (SDSA) as well as disassembly of D loop recombination intermediates. The chain is Regulator of telomere elongation helicase 1 homolog from Drosophila persimilis (Fruit fly).